The following is a 499-amino-acid chain: Circadian clock oscillator protein KaiC (499 aa).

KaiC domains follow at residues 1 to 243 (MQSS…VSVF) and 257 to 499 (VRIS…DERA). Positions 45, 46, 47, 48, 49, 85, 220, 221, 222, 224, 226, 286, 287, 288, 289, 290, 291, and 292 each coordinate ATP. Thr49 provides a ligand contact to Mg(2+). Mg(2+) is bound at residue Thr291. Glu314 lines the Mg(2+) pocket. Trp327 provides a ligand contact to ATP. Ser427 is subject to Phosphoserine; by autocatalysis. Thr428 is subject to Phosphothreonine; by autocatalysis. ATP contacts are provided by Arg447, Lys453, Met454, Arg455, Ser457, His459, and Lys461.

It belongs to the KaiC family. Homohexamer; hexamerization is dependent on ATP-binding. Component of the KaiBC complex. KaiC interacts with SasA, activating its autokinase function and leading to RpaA activation. Mg(2+) is required as a cofactor. Post-translationally, phosphorylated on serine and threonine residues by autocatalysis. Has a 4 step phosphorylation cycle; the autokinase acts first on Thr-428, then Ser-427. When Ser-427 is modified KaiC switches to an autophosphatase mode, acting first on phospho-Thr-428 then phospho-Ser-427.

The enzyme catalyses L-seryl-[protein] + ATP = O-phospho-L-seryl-[protein] + ADP + H(+). It carries out the reaction L-threonyl-[protein] + ATP = O-phospho-L-threonyl-[protein] + ADP + H(+). The catalysed reaction is ATP + H2O = ADP + phosphate + H(+). Functionally, central component of the KaiBC oscillator complex, which constitutes the main circadian regulator in cyanobacteria. Its composition changes during the circadian cycle to control KaiC phosphorylation. Autophosphorylates and has a weak ATPase activity; ATPase activity defines the circadian period. This is Circadian clock oscillator protein KaiC from Prochlorococcus marinus (strain MIT 9313).